We begin with the raw amino-acid sequence, 652 residues long: Acetyl-coenzyme A synthetase (652 aa).

Residues 191–194 (RAGR), Thr-311, and Asn-335 contribute to the CoA site. Residues 387–389 (GEP), 411–416 (DTWWQT), Asp-500, and Arg-515 each bind ATP. Ser-523 contributes to the CoA binding site. Arg-526 serves as a coordination point for ATP. Mg(2+) contacts are provided by Val-537, His-539, and Ile-542. Arg-584 provides a ligand contact to CoA. An N6-acetyllysine modification is found at Lys-609.

Belongs to the ATP-dependent AMP-binding enzyme family. The cofactor is Mg(2+). Post-translationally, acetylated. Deacetylation by the SIR2-homolog deacetylase activates the enzyme.

It catalyses the reaction acetate + ATP + CoA = acetyl-CoA + AMP + diphosphate. Its function is as follows. Catalyzes the conversion of acetate into acetyl-CoA (AcCoA), an essential intermediate at the junction of anabolic and catabolic pathways. Acs undergoes a two-step reaction. In the first half reaction, Acs combines acetate with ATP to form acetyl-adenylate (AcAMP) intermediate. In the second half reaction, it can then transfer the acetyl group from AcAMP to the sulfhydryl group of CoA, forming the product AcCoA. Enables the cell to use acetate during aerobic growth to generate energy via the TCA cycle, and biosynthetic compounds via the glyoxylate shunt. Acetylates CheY, the response regulator involved in flagellar movement and chemotaxis. In Yersinia pseudotuberculosis serotype I (strain IP32953), this protein is Acetyl-coenzyme A synthetase.